The following is a 472-amino-acid chain: Aspartyl/glutamyl-tRNA(Asn/Gln) amidotransferase subunit B (472 aa).

The protein belongs to the GatB/GatE family. GatB subfamily. Heterotrimer of A, B and C subunits.

It catalyses the reaction L-glutamyl-tRNA(Gln) + L-glutamine + ATP + H2O = L-glutaminyl-tRNA(Gln) + L-glutamate + ADP + phosphate + H(+). The enzyme catalyses L-aspartyl-tRNA(Asn) + L-glutamine + ATP + H2O = L-asparaginyl-tRNA(Asn) + L-glutamate + ADP + phosphate + 2 H(+). Allows the formation of correctly charged Asn-tRNA(Asn) or Gln-tRNA(Gln) through the transamidation of misacylated Asp-tRNA(Asn) or Glu-tRNA(Gln) in organisms which lack either or both of asparaginyl-tRNA or glutaminyl-tRNA synthetases. The reaction takes place in the presence of glutamine and ATP through an activated phospho-Asp-tRNA(Asn) or phospho-Glu-tRNA(Gln). The chain is Aspartyl/glutamyl-tRNA(Asn/Gln) amidotransferase subunit B from Campylobacter jejuni subsp. jejuni serotype O:23/36 (strain 81-176).